The following is a 533-amino-acid chain: Atypical kinase COQ8B, mitochondrial (533 aa).

The helical transmembrane segment at 93 to 109 (LASFGGLAVGLGLGALA) threads the bilayer. Positions 156–159 (KIGQ) match the KxGQ motif motif. The region spanning 192–424 (MMRVLEEELG…DRVLQKSQDL (233 aa)) is the Protein kinase domain. The AAAS motif motif lies at 217–220 (AAAS). ATP is bound by residues Ser-220, Lys-238, and 325–328 (MELA). The Proton acceptor role is filled by Asp-368. ATP is bound by residues Asn-373 and Asp-387.

It belongs to the protein kinase superfamily. ADCK protein kinase family. Homodimer; homodimerizes via its transmembrane region. Interacts with COQ6 and COQ7. Interacts with the multi-subunit COQ enzyme complex, composed of at least COQ3, COQ4, COQ5, COQ6, COQ7 and COQ9.

Its subcellular location is the mitochondrion membrane. It localises to the cytoplasm. It is found in the cytosol. The protein resides in the cell membrane. It participates in cofactor biosynthesis; ubiquinone biosynthesis. Atypical kinase involved in the biosynthesis of coenzyme Q, also named ubiquinone, an essential lipid-soluble electron transporter for aerobic cellular respiration. Its substrate specificity is still unclear: may act as a protein kinase that mediates phosphorylation of COQ3. According to other reports, acts as a small molecule kinase, possibly a lipid kinase that phosphorylates a prenyl lipid in the ubiquinone biosynthesis pathway, as suggested by its ability to bind coenzyme Q lipid intermediates. However, the small molecule kinase activity was not confirmed by another publication. Required for podocyte migration. The chain is Atypical kinase COQ8B, mitochondrial from Mus musculus (Mouse).